Reading from the N-terminus, the 863-residue chain is Bifunctional uridylyltransferase/uridylyl-removing enzyme (863 aa).

Residues 1 to 328 (MLFSPTLSSP…PSNQDTVIDQ (328 aa)) are uridylyltransferase. Residues 329-687 (LDDDFQLINQ…ISNRFSLGGT (359 aa)) form a uridylyl-removing region. One can recognise an HD domain in the interval 446 to 568 (VDEHTLRVML…VQNQVRLDYL (123 aa)). ACT domains are found at residues 688–772 (EVFI…PNRQ) and 794–863 (QMEL…RNIG).

Belongs to the GlnD family. Requires Mg(2+) as cofactor.

It catalyses the reaction [protein-PII]-L-tyrosine + UTP = [protein-PII]-uridylyl-L-tyrosine + diphosphate. The catalysed reaction is [protein-PII]-uridylyl-L-tyrosine + H2O = [protein-PII]-L-tyrosine + UMP + H(+). Uridylyltransferase (UTase) activity is inhibited by glutamine, while glutamine activates uridylyl-removing (UR) activity. Modifies, by uridylylation and deuridylylation, the PII regulatory proteins (GlnB and homologs), in response to the nitrogen status of the cell that GlnD senses through the glutamine level. Under low glutamine levels, catalyzes the conversion of the PII proteins and UTP to PII-UMP and PPi, while under higher glutamine levels, GlnD hydrolyzes PII-UMP to PII and UMP (deuridylylation). Thus, controls uridylylation state and activity of the PII proteins, and plays an important role in the regulation of nitrogen assimilation and metabolism. In Haemophilus influenzae (strain 86-028NP), this protein is Bifunctional uridylyltransferase/uridylyl-removing enzyme.